Consider the following 172-residue polypeptide: Signal peptidase complex catalytic subunit SEC11 (172 aa).

The Cytoplasmic segment spans residues 1-14; the sequence is MLSSLGNPRQAAAQ. The chain crosses the membrane as a helical; Signal-anchor for type II membrane protein span at residues 15–35; sequence LMNFALILSTAFMMWKGLSVI. At 36 to 172 the chain is on the lumenal side; sequence TDSPSPIVVV…MGLLVVLQRE (137 aa). Active-site charge relay system residues include Ser-49 and His-90. Asn-111 carries N-linked (GlcNAc...) asparagine glycosylation. The active-site Charge relay system is Asp-115. The tract at residues 158-169 is C-terminal short (CTS) helix; sequence VMLGIMGLLVVL.

It belongs to the peptidase S26B family. In terms of assembly, component of the signal peptidase complex (SPC) composed of a catalytic subunit SEC11 and three accessory subunits SPC1, SPC2 and SPC3. The complex induces a local thinning of the ER membrane which is used to measure the length of the signal peptide (SP) h-region of protein substrates. This ensures the selectivity of the complex towards h-regions shorter than 18-20 amino acids. SPC associates with the translocon complex.

Its subcellular location is the endoplasmic reticulum membrane. It catalyses the reaction Cleavage of hydrophobic, N-terminal signal or leader sequences from secreted and periplasmic proteins.. Catalytic component of the signal peptidase complex (SPC) which catalyzes the cleavage of N-terminal signal sequences from nascent proteins as they are translocated into the lumen of the endoplasmic reticulum. Specifically cleaves N-terminal signal peptides that contain a hydrophobic alpha-helix (h-region) shorter than 18-20 amino acids. This is Signal peptidase complex catalytic subunit SEC11 (SEC11) from Fusarium vanettenii (strain ATCC MYA-4622 / CBS 123669 / FGSC 9596 / NRRL 45880 / 77-13-4) (Fusarium solani subsp. pisi).